A 275-amino-acid chain; its full sequence is Subtilisin (275 aa).

Residue glutamine 2 coordinates Ca(2+). The region spanning 5 to 274 (PYGISQIKAP…KGLINVQAAA (270 aa)) is the Peptidase S8 domain. The active-site Charge relay system is the aspartate 32. Aspartate 41 contributes to the Ca(2+) binding site. The Charge relay system role is filled by histidine 64. Residues leucine 75, asparagine 77, isoleucine 79, valine 81, alanine 169, tyrosine 171, and threonine 174 each coordinate Ca(2+). Serine 221 (charge relay system) is an active-site residue.

This sequence belongs to the peptidase S8 family. Ca(2+) is required as a cofactor.

It localises to the secreted. It catalyses the reaction Hydrolysis of proteins with broad specificity for peptide bonds, and a preference for a large uncharged residue in P1. Hydrolyzes peptide amides.. Subtilisin is an extracellular alkaline serine protease, it catalyzes the hydrolysis of proteins and peptide amides. This chain is Subtilisin (apr), found in Bacillus pumilus (Bacillus mesentericus).